A 351-amino-acid chain; its full sequence is Protein RecA (351 aa).

67–74 is an ATP binding site; sequence GPESSGKT.

It belongs to the RecA family.

It localises to the cytoplasm. Can catalyze the hydrolysis of ATP in the presence of single-stranded DNA, the ATP-dependent uptake of single-stranded DNA by duplex DNA, and the ATP-dependent hybridization of homologous single-stranded DNAs. It interacts with LexA causing its activation and leading to its autocatalytic cleavage. The chain is Protein RecA from Mannheimia succiniciproducens (strain KCTC 0769BP / MBEL55E).